The following is a 230-amino-acid chain: MASKHNADLSSAAMLAALLLCALGAPVEYEPTDSPAGDFSGEEQEVTPDLLSASPVWDLIIGVTAHHQKEFEDEFQQEVKYRFLNHYKLSSLPADCPSANFSKEACLQRLAEGLHTYMVLFKHVEKEYPSSSILLHARYHSGALIGLIKEKMRNPGQVTVPTSRQEQQLLQDMDNPSTFHRKMTAHNILRQLHNFLRNGKVAIRKREMPKQKRRKDDGIIPPIHPSYQMT.

The N-terminal stretch at Met1–Gly24 is a signal peptide. Cys96 and Cys106 are disulfide-bonded. N-linked (GlcNAc...) asparagine glycosylation occurs at Asn100. The segment covering Arg206–Gly218 has biased composition (basic and acidic residues). Positions Arg206–Thr230 are disordered.

The protein belongs to the IL-6 superfamily. As to quaternary structure, component of a hexamer of two molecules each of IL6, IL6R and IL6ST; first binds to IL6R to associate with the signaling subunit IL6ST. In terms of tissue distribution, expressed in kidney and spleen. Low expression in liver and gills.

Its subcellular location is the secreted. Its function is as follows. Cytokine with a wide variety of biological functions in immunity, tissue regeneration, and metabolism. Binds to IL6R, then the complex associates to the signaling subunit IL6ST/gp130 to trigger the intracellular IL6-signaling pathway. The interaction with the membrane-bound IL6R and IL6ST stimulates 'classic signaling', whereas the binding of IL6 and soluble IL6R to IL6ST stimulates 'trans-signaling'. Alternatively, 'cluster signaling' occurs when membrane-bound IL6:IL6R complexes on transmitter cells activate IL6ST receptors on neighboring receiver cells. The protein is Interleukin-6 (il6) of Paralichthys olivaceus (Bastard halibut).